A 686-amino-acid chain; its full sequence is X-linked interleukin-1 receptor accessory protein-like 2 (686 aa).

The first 16 residues, 1–16 (MKLPLLLALVVCSAVS), serve as a signal peptide directing secretion. At 17-354 (TNLKMVSKRN…LLRKKDLIYK (338 aa)) the chain is on the extracellular side. The Ig-like C2-type 1 domain maps to 32–132 (IDWSVDLKTY…YCMKVSMSLT (101 aa)). Cys53 and Cys116 are oxidised to a cystine. 5 N-linked (GlcNAc...) asparagine glycosylation sites follow: Asn63, Asn120, Asn136, Asn211, and Asn328. 2 consecutive Ig-like C2-type domains span residues 141 to 232 (CYNS…LKVT) and 239 to 347 (PPKP…VLLR). Disulfide bonds link Cys162–Cys214 and Cys265–Cys331. A helical membrane pass occupies residues 355 to 375 (IELAGGLGAIFLLLILLLVVY). Over 376–686 (KCYNIELMLF…KELSFTSDIW (311 aa)) the chain is Cytoplasmic. The TIR domain maps to 400 to 556 (KEYDAYLSYT…KFWKHLVYEM (157 aa)). The active site involves Glu488.

This sequence belongs to the interleukin-1 receptor family. Detected in fetal brain after day 12.5, in particular in parts of the diencephalon and in the basal plate of the spinal cord. In postnatal brain detected in cerebral cortex, olfactory bulb, in the CA1 region of the hippocampus and in Purkinje cells of the Xth cerebellar lobule.

The protein localises to the membrane. It catalyses the reaction NAD(+) + H2O = ADP-D-ribose + nicotinamide + H(+). The chain is X-linked interleukin-1 receptor accessory protein-like 2 (Il1rapl2) from Mus musculus (Mouse).